Reading from the N-terminus, the 321-residue chain is AA9 family lytic polysaccharide monooxygenase A (321 aa).

Residues 1–21 form the signal peptide; sequence MFRAQSFLPVLALVLRVAAHG. His-20 lines the Cu(2+) pocket. Cysteines 71 and 197 form a disulfide. Asn-72 carries an N-linked (GlcNAc...) asparagine glycan. His-105 serves as a coordination point for Cu(2+). N-linked (GlcNAc...) asparagine glycosylation is present at Asn-157. O2-binding residues include His-183 and Gln-192. Tyr-194 contributes to the Cu(2+) binding site. Residues 278 to 306 are disordered; the sequence is SSSAAATQSSSAAPSSSAIGTSTASSAAA. Ser-293 carries the GPI-anchor amidated serine lipid modification. Positions 294–321 are cleaved as a propeptide — removed in mature form; that stretch reads SAIGTSTASSAAASGTAIVDANTCMNSA.

The protein belongs to the polysaccharide monooxygenase AA9 family. Cu(2+) serves as cofactor.

The protein resides in the cell membrane. It carries out the reaction [(1-&gt;4)-beta-D-glucosyl]n+m + reduced acceptor + O2 = 4-dehydro-beta-D-glucosyl-[(1-&gt;4)-beta-D-glucosyl]n-1 + [(1-&gt;4)-beta-D-glucosyl]m + acceptor + H2O.. Lytic polysaccharide monooxygenase (LPMO) that depolymerizes crystalline and amorphous polysaccharides via the oxidation of scissile alpha- or beta-(1-4)-glycosidic bonds, yielding C1 or C4 oxidation products. Catalysis by LPMOs requires the reduction of the active-site copper from Cu(II) to Cu(I) by a reducing agent and H(2)O(2) or O(2) as a cosubstrate. Has broad specificity, cleaving at any position along the beta-glucan backbone of xyloglucan, regardless of substitutions. Shows minor activity on glucomannan. The sequence is that of AA9 family lytic polysaccharide monooxygenase A from Gloeophyllum trabeum (strain ATCC 11539 / FP-39264 / Madison 617) (Brown rot fungus).